We begin with the raw amino-acid sequence, 606 residues long: Proton myo-inositol cotransporter hmit-1.1 (606 aa).

Topologically, residues 1 to 20 are cytoplasmic; it reads MVAVAAFSSSGQDKPAHTPK. The helical transmembrane segment at 21–41 threads the bilayer; sequence LGLFVYILAAASVIGGFLFGY. Over 42–63 the chain is Extracellular; sequence DTSVVSAAMLYMPDAPGLKPMD. The helical transmembrane segment at 64–84 threads the bilayer; it reads TVWQEVLVSISPGMAAVGSLM. Residues 85–96 are Cytoplasmic-facing; sequence SGTSSDYIGRRK. A helical membrane pass occupies residues 97-117; it reads VILGASAIFTIGALVCAASVN. Lys118 is a topological domain (extracellular). A helical transmembrane segment spans residues 119 to 139; the sequence is IMLLVGRVLLGIAIGFASMIV. Over 140 to 152 the chain is Cytoplasmic; the sequence is PVYLGETAPTHVR. Residues 153–173 traverse the membrane as a helical segment; the sequence is GMLVAAFALMISFGQVVANIT. Topologically, residues 174–188 are extracellular; that stretch reads GGAFSYIDPYNVGWR. A helical transmembrane segment spans residues 189–209; the sequence is LMFAFAAVPSIIQFVCFMFLP. At 210–278 the chain is on the cytoplasmic side; the sequence is ETPRWLYENG…RILKTPHVLK (69 aa). The chain crosses the membrane as a helical span at residues 279–299; it reads ACFIGSMLQAFQQLAGINTIL. At 300 to 317 the chain is on the extracellular side; it reads YYTADIIRSSGISNNHTT. Asn314 carries an N-linked (GlcNAc...) asparagine glycan. The helical transmembrane segment at 318-338 threads the bilayer; sequence IWISVLLSLCNFIGPFVPMSL. The Cytoplasmic segment spans residues 339–345; that stretch reads IEKVGRR. Residues 346 to 366 form a helical membrane-spanning segment; sequence IIFLFSCGLVVLSLVFIGVAF. At 367–464 the chain is on the extracellular side; it reads LLVNHDSAAT…EKYYCDTKYT (98 aa). Residues Asn387 and Asn445 are each glycosylated (N-linked (GlcNAc...) asparagine). The chain crosses the membrane as a helical span at residues 465–485; that stretch reads LLPIIACGVYLLTFSSGFTSL. The Cytoplasmic segment spans residues 486-501; sequence PWVLNSEFYPMWARST. The chain crosses the membrane as a helical span at residues 502-522; it reads CVAISTTSNWVFNLIIALTYL. Over 523-531 the chain is Extracellular; that stretch reads SLTQVIGKY. A helical membrane pass occupies residues 532 to 552; sequence GAFWLYAGLTVIAFIFILFLV. Residues 553–606 lie on the Cytoplasmic side of the membrane; that stretch reads PETKGYSIEEVEMLFMNKKQRREAESRRRETVTEVRSRMNSTVSFGQHNEVHKY.

This sequence belongs to the major facilitator superfamily. Sugar transporter (TC 2.A.1.1) family. Expressed in the intestine.

Its subcellular location is the cell membrane. It catalyses the reaction myo-inositol(out) + H(+)(out) = myo-inositol(in) + H(+)(in). H(+)-myo-inositol cotransporter. Probably by promoting the transport of myo-inositol regulates intracellular osmosis in response to hyperosmotic stress. The polypeptide is Proton myo-inositol cotransporter hmit-1.1 (Caenorhabditis elegans).